Consider the following 402-residue polypeptide: Multidrug resistance protein MdtH (402 aa).

Over 1–12 (MSRVSQARNLGK) the chain is Cytoplasmic. The chain crosses the membrane as a helical span at residues 13-33 (YFLLIDNMLVVLGFFVVFPLI). At 34-98 (SIRFVDQMGW…GFATMGIAHE (65 aa)) the chain is on the periplasmic side. The chain crosses the membrane as a helical span at residues 99-116 (PWLLWFSCFLSGLGGTLF). The Cytoplasmic portion of the chain corresponds to 117–138 (DPPRSALVVKLIRPEQRGRFFS). A helical transmembrane segment spans residues 139-159 (LLMMQDSAGAVIGALLGSWLL). The Periplasmic portion of the chain corresponds to 160-164 (QYDFR). Residues 165–185 (LVCATGAILFILCALFNAWLL) traverse the membrane as a helical segment. Over 186 to 213 (PAWKLSTARTPVREGMRRVMSNKRFVTY) the chain is Cytoplasmic. The chain crosses the membrane as a helical span at residues 214 to 234 (VLTLAGYYMLAVQVMLMLPIM). The Periplasmic portion of the chain corresponds to 235-243 (VNDIAGSPA). A helical transmembrane segment spans residues 244-264 (AVKWMYAIEACLSLTLLYPIA). The Cytoplasmic portion of the chain corresponds to 265–276 (RWSEKRFRLEHR). The chain crosses the membrane as a helical span at residues 277–297 (LMAGLLVMSLSMLPIGMVGNL). At 298–299 (QQ) the chain is on the periplasmic side. Residues 300–320 (LFTLICAFYIGSVIAEPARET) form a helical membrane-spanning segment. The Cytoplasmic portion of the chain corresponds to 321–339 (LSASPADARARGSYMGFSR). A helical transmembrane segment spans residues 340-360 (LGLAIGGAISYIGGGWLFDMG). Residues 361–367 (KALAQPE) are Periplasmic-facing. The helical transmembrane segment at 368-388 (LPWMMLGIIGFITFLALGWQF) threads the bilayer. Over 389–402 (SHKRTPRRMLEPGA) the chain is Cytoplasmic.

Belongs to the major facilitator superfamily. DHA1 family. MdtH (TC 2.A.1.2.21) subfamily.

The protein resides in the cell inner membrane. In Salmonella typhi, this protein is Multidrug resistance protein MdtH.